A 56-amino-acid polypeptide reads, in one-letter code: Large ribosomal subunit protein bL33 (56 aa).

Belongs to the bacterial ribosomal protein bL33 family.

The chain is Large ribosomal subunit protein bL33 from Histophilus somni (strain 129Pt) (Haemophilus somnus).